The chain runs to 270 residues: Tryptophan 2,3-dioxygenase-like protein (270 aa).

This sequence belongs to the tryptophan 2,3-dioxygenase family.

This Xanthomonas campestris pv. campestris (strain 8004) protein is Tryptophan 2,3-dioxygenase-like protein.